Reading from the N-terminus, the 101-residue chain is Large ribosomal subunit protein bL28 (101 aa).

Belongs to the bacterial ribosomal protein bL28 family.

The sequence is that of Large ribosomal subunit protein bL28 from Rhodopseudomonas palustris (strain BisA53).